A 434-amino-acid chain; its full sequence is UPF0597 protein CLK_1462 (434 aa).

The protein belongs to the UPF0597 family.

This chain is UPF0597 protein CLK_1462, found in Clostridium botulinum (strain Loch Maree / Type A3).